We begin with the raw amino-acid sequence, 427 residues long: 3-phosphoshikimate 1-carboxyvinyltransferase (427 aa).

Residues Lys-20, Ser-21, and Arg-25 each coordinate 3-phosphoshikimate. Lys-20 contacts phosphoenolpyruvate. Residues Gly-92 and Arg-120 each contribute to the phosphoenolpyruvate site. Ser-166, Gln-168, Asp-312, and Lys-339 together coordinate 3-phosphoshikimate. Position 168 (Gln-168) interacts with phosphoenolpyruvate. Asp-312 acts as the Proton acceptor in catalysis. Phosphoenolpyruvate is bound by residues Arg-343 and Arg-385.

The protein belongs to the EPSP synthase family. In terms of assembly, monomer.

The protein resides in the cytoplasm. It catalyses the reaction 3-phosphoshikimate + phosphoenolpyruvate = 5-O-(1-carboxyvinyl)-3-phosphoshikimate + phosphate. It participates in metabolic intermediate biosynthesis; chorismate biosynthesis; chorismate from D-erythrose 4-phosphate and phosphoenolpyruvate: step 6/7. Its function is as follows. Catalyzes the transfer of the enolpyruvyl moiety of phosphoenolpyruvate (PEP) to the 5-hydroxyl of shikimate-3-phosphate (S3P) to produce enolpyruvyl shikimate-3-phosphate and inorganic phosphate. This chain is 3-phosphoshikimate 1-carboxyvinyltransferase, found in Streptococcus uberis (strain ATCC BAA-854 / 0140J).